A 126-amino-acid chain; its full sequence is MKTPAELKYSKDHEWARQEGDVVFIGITDYAQGELGEIVYVDVTTEGETLEADEVFGSIEAVKTVSDLMMPIAGEVLEVNPDLEEQPELVNSDPYGAGWIIKVKAANAADFDNLLSAAEYEKLIAQ.

The 83-residue stretch at 22–104 (VVFIGITDYA…YGAGWIIKVK (83 aa)) folds into the Lipoyl-binding domain. Lysine 63 carries the N6-lipoyllysine modification.

The protein belongs to the GcvH family. In terms of assembly, the glycine cleavage system is composed of four proteins: P, T, L and H. (R)-lipoate is required as a cofactor.

In terms of biological role, the glycine cleavage system catalyzes the degradation of glycine. The H protein shuttles the methylamine group of glycine from the P protein to the T protein. The sequence is that of Glycine cleavage system H protein from Porphyromonas gingivalis (strain ATCC 33277 / DSM 20709 / CIP 103683 / JCM 12257 / NCTC 11834 / 2561).